The following is a 335-amino-acid chain: Probable geranylgeranyl transferase type-2 subunit beta (335 aa).

PFTB repeat units lie at residues T74–N115, A122–G163, I170–G211, R218–G259, and S266–L312. Geranylgeranyl diphosphate-binding positions include H196–G198 and R238–W250. Residues D244, C246, and H296 each coordinate Zn(2+).

This sequence belongs to the protein prenyltransferase subunit beta family. In terms of assembly, heterodimer of an alpha and a beta subunit. Requires Zn(2+) as cofactor.

It catalyses the reaction geranylgeranyl diphosphate + L-cysteinyl-[protein] = S-geranylgeranyl-L-cysteinyl-[protein] + diphosphate. Functionally, catalyzes the transfer of a geranyl-geranyl moiety from geranyl-geranyl pyrophosphate to both cysteines in Rab proteins with an -XXCC, -XCXC and -CCXX C-terminal. This is Probable geranylgeranyl transferase type-2 subunit beta (ggtb-1) from Caenorhabditis elegans.